The chain runs to 542 residues: ABC transport system permease protein p69 (542 aa).

A run of 12 helical transmembrane segments spans residues 23 to 43 (ALAI…FSGF), 77 to 97 (IFYV…FSYL), 114 to 134 (FTIF…NNLF), 140 to 160 (ATLT…TAFF), 212 to 232 (LSIA…GGTV), 236 to 256 (LVLI…ASVF), 287 to 307 (VMIY…LVQL), 350 to 370 (TQAI…GFLA), 386 to 406 (LLVI…PIIF), 412 to 432 (IIFV…TINF), 481 to 501 (LVVF…NFFE), and 509 to 529 (GTIT…LMAV). The 178-residue stretch at 349 to 526 (TTQAISLITL…VYLMVFEVIL (178 aa)) folds into the ABC transmembrane type-1 domain.

Belongs to the binding-protein-dependent transport system permease family.

It localises to the cell membrane. Its function is as follows. Probably part of a high-affinity transport system. The polypeptide is ABC transport system permease protein p69 (p69) (Mycoplasma pneumoniae (strain ATCC 29342 / M129 / Subtype 1) (Mycoplasmoides pneumoniae)).